Consider the following 285-residue polypeptide: ATP phosphoribosyltransferase (285 aa).

Belongs to the ATP phosphoribosyltransferase family. Long subfamily. Requires Mg(2+) as cofactor.

The protein localises to the cytoplasm. The catalysed reaction is 1-(5-phospho-beta-D-ribosyl)-ATP + diphosphate = 5-phospho-alpha-D-ribose 1-diphosphate + ATP. Its pathway is amino-acid biosynthesis; L-histidine biosynthesis; L-histidine from 5-phospho-alpha-D-ribose 1-diphosphate: step 1/9. Its activity is regulated as follows. Feedback inhibited by histidine. Its function is as follows. Catalyzes the condensation of ATP and 5-phosphoribose 1-diphosphate to form N'-(5'-phosphoribosyl)-ATP (PR-ATP). Has a crucial role in the pathway because the rate of histidine biosynthesis seems to be controlled primarily by regulation of HisG enzymatic activity. This Streptomyces coelicolor (strain ATCC BAA-471 / A3(2) / M145) protein is ATP phosphoribosyltransferase.